The following is an 870-amino-acid chain: Leucine--tRNA ligase (870 aa).

Residues 42–52 (PYPSGKLHMGH) carry the 'HIGH' region motif. The short motif at 629–633 (KMSKS) is the 'KMSKS' region element. Residue Lys-632 participates in ATP binding.

This sequence belongs to the class-I aminoacyl-tRNA synthetase family.

The protein localises to the cytoplasm. It carries out the reaction tRNA(Leu) + L-leucine + ATP = L-leucyl-tRNA(Leu) + AMP + diphosphate. This Azotobacter vinelandii (strain DJ / ATCC BAA-1303) protein is Leucine--tRNA ligase.